A 341-amino-acid chain; its full sequence is Formimidoylglutamase (341 aa).

The Mn(2+) site is built by His133, Asp162, His164, Asp166, Cys253, and Asp255.

The protein belongs to the arginase family. Requires Mn(2+) as cofactor.

The catalysed reaction is N-formimidoyl-L-glutamate + H2O = formamide + L-glutamate. The protein operates within amino-acid degradation; L-histidine degradation into L-glutamate; L-glutamate from N-formimidoyl-L-glutamate (hydrolase route): step 1/1. Catalyzes the conversion of N-formimidoyl-L-glutamate to L-glutamate and formamide. This is Formimidoylglutamase from Aromatoleum aromaticum (strain DSM 19018 / LMG 30748 / EbN1) (Azoarcus sp. (strain EbN1)).